Here is an 882-residue protein sequence, read N- to C-terminus: Alanine--tRNA ligase (882 aa).

The Zn(2+) site is built by His570, His574, Cys672, and His676.

It belongs to the class-II aminoacyl-tRNA synthetase family. Requires Zn(2+) as cofactor.

Its subcellular location is the cytoplasm. The catalysed reaction is tRNA(Ala) + L-alanine + ATP = L-alanyl-tRNA(Ala) + AMP + diphosphate. Catalyzes the attachment of alanine to tRNA(Ala) in a two-step reaction: alanine is first activated by ATP to form Ala-AMP and then transferred to the acceptor end of tRNA(Ala). Also edits incorrectly charged Ser-tRNA(Ala) and Gly-tRNA(Ala) via its editing domain. This Xanthomonas campestris pv. campestris (strain B100) protein is Alanine--tRNA ligase.